A 391-amino-acid chain; its full sequence is Imidazolonepropionase (391 aa).

2 residues coordinate Fe(3+): H72 and H74. The Zn(2+) site is built by H72 and H74. 4-imidazolone-5-propanoate-binding residues include R81, Y139, and H166. Y139 is an N-formimidoyl-L-glutamate binding site. H229 contacts Fe(3+). H229 serves as a coordination point for Zn(2+). Q232 lines the 4-imidazolone-5-propanoate pocket. D303 contributes to the Fe(3+) binding site. D303 is a binding site for Zn(2+). Residues N305 and G307 each coordinate N-formimidoyl-L-glutamate. S308 contributes to the 4-imidazolone-5-propanoate binding site.

The protein belongs to the metallo-dependent hydrolases superfamily. HutI family. The cofactor is Zn(2+). It depends on Fe(3+) as a cofactor.

The protein localises to the cytoplasm. It carries out the reaction 4-imidazolone-5-propanoate + H2O = N-formimidoyl-L-glutamate. It functions in the pathway amino-acid degradation; L-histidine degradation into L-glutamate; N-formimidoyl-L-glutamate from L-histidine: step 3/3. In terms of biological role, catalyzes the hydrolytic cleavage of the carbon-nitrogen bond in imidazolone-5-propanoate to yield N-formimidoyl-L-glutamate. It is the third step in the universal histidine degradation pathway. The protein is Imidazolonepropionase of Streptomyces coelicolor (strain ATCC BAA-471 / A3(2) / M145).